A 179-amino-acid polypeptide reads, in one-letter code: Crossover junction endodeoxyribonuclease RuvC (179 aa).

Residues Asp14, Glu74, and Asp147 contribute to the active site. Mg(2+) contacts are provided by Asp14, Glu74, and Asp147.

This sequence belongs to the RuvC family. In terms of assembly, homodimer which binds Holliday junction (HJ) DNA. The HJ becomes 2-fold symmetrical on binding to RuvC with unstacked arms; it has a different conformation from HJ DNA in complex with RuvA. In the full resolvosome a probable DNA-RuvA(4)-RuvB(12)-RuvC(2) complex forms which resolves the HJ. Mg(2+) is required as a cofactor.

The protein localises to the cytoplasm. The enzyme catalyses Endonucleolytic cleavage at a junction such as a reciprocal single-stranded crossover between two homologous DNA duplexes (Holliday junction).. In terms of biological role, the RuvA-RuvB-RuvC complex processes Holliday junction (HJ) DNA during genetic recombination and DNA repair. Endonuclease that resolves HJ intermediates. Cleaves cruciform DNA by making single-stranded nicks across the HJ at symmetrical positions within the homologous arms, yielding a 5'-phosphate and a 3'-hydroxyl group; requires a central core of homology in the junction. The consensus cleavage sequence is 5'-(A/T)TT(C/G)-3'. Cleavage occurs on the 3'-side of the TT dinucleotide at the point of strand exchange. HJ branch migration catalyzed by RuvA-RuvB allows RuvC to scan DNA until it finds its consensus sequence, where it cleaves and resolves the cruciform DNA. This is Crossover junction endodeoxyribonuclease RuvC from Rubrobacter xylanophilus (strain DSM 9941 / JCM 11954 / NBRC 16129 / PRD-1).